An 86-amino-acid chain; its full sequence is MANIKSQEKRIRTNERARLRNQATKSSLRTAIRGLREAIAEGDKEKAGELLVSTSRKLDKAVTKGVIHKNQAANKKSALALALNKL.

A compositionally biased stretch (basic and acidic residues) spans 1–18 (MANIKSQEKRIRTNERAR). The interval 1–25 (MANIKSQEKRIRTNERARLRNQATK) is disordered.

Belongs to the bacterial ribosomal protein bS20 family.

In terms of biological role, binds directly to 16S ribosomal RNA. In Mycobacteroides abscessus (strain ATCC 19977 / DSM 44196 / CCUG 20993 / CIP 104536 / JCM 13569 / NCTC 13031 / TMC 1543 / L948) (Mycobacterium abscessus), this protein is Small ribosomal subunit protein bS20.